We begin with the raw amino-acid sequence, 201 residues long: Recombination protein RecR (201 aa).

The segment at C59–C74 adopts a C4-type zinc-finger fold. The 96-residue stretch at R82 to P177 folds into the Toprim domain.

This sequence belongs to the RecR family.

Its function is as follows. May play a role in DNA repair. It seems to be involved in an RecBC-independent recombinational process of DNA repair. It may act with RecF and RecO. The chain is Recombination protein RecR from Hahella chejuensis (strain KCTC 2396).